Reading from the N-terminus, the 192-residue chain is Protein hunchback (192 aa).

Disordered regions lie at residues 16 to 54 and 152 to 192; these read SHHH…SNTN and LTPP…KYMA. Basic residues predominate over residues 17 to 28; it reads HHHHHHHAHHSH. The segment covering 32–41 has biased composition (low complexity); that stretch reads SNSNASSPHQ. A compositionally biased stretch (basic and acidic residues) spans 173-192; that stretch reads EPEKEHDLMSNSSEDMKYMA.

The protein belongs to the hunchback C2H2-type zinc-finger protein family.

It localises to the nucleus. Its function is as follows. Gap class segmentation protein that controls development of head structures. In Drosophila tanythrix (Fruit fly), this protein is Protein hunchback (hb).